A 272-amino-acid chain; its full sequence is tRNA pseudouridine synthase A (272 aa).

Asp62 serves as the catalytic Nucleophile. Tyr120 is a binding site for substrate.

The protein belongs to the tRNA pseudouridine synthase TruA family. In terms of assembly, homodimer.

It catalyses the reaction uridine(38/39/40) in tRNA = pseudouridine(38/39/40) in tRNA. Its function is as follows. Formation of pseudouridine at positions 38, 39 and 40 in the anticodon stem and loop of transfer RNAs. The sequence is that of tRNA pseudouridine synthase A from Nitrosomonas europaea (strain ATCC 19718 / CIP 103999 / KCTC 2705 / NBRC 14298).